The chain runs to 309 residues: Homoserine kinase (309 aa).

91-101 (PIGSGLGSSAC) serves as a coordination point for ATP.

The protein belongs to the GHMP kinase family. Homoserine kinase subfamily.

It is found in the cytoplasm. It catalyses the reaction L-homoserine + ATP = O-phospho-L-homoserine + ADP + H(+). It functions in the pathway amino-acid biosynthesis; L-threonine biosynthesis; L-threonine from L-aspartate: step 4/5. Its function is as follows. Catalyzes the ATP-dependent phosphorylation of L-homoserine to L-homoserine phosphate. This Pectobacterium atrosepticum (strain SCRI 1043 / ATCC BAA-672) (Erwinia carotovora subsp. atroseptica) protein is Homoserine kinase.